A 334-amino-acid polypeptide reads, in one-letter code: MTTNNPVCASDAHMEMYSSKLYTSALFLNLIIATTSMILTGFAIQKLFMESIINISTRMFLFCGLMCCSLHQTAYIVLRIQVIYQVFFKLSEPCNLYYPAIDCKYVTFSLVAGNTGMIFIQSAMTIDRIFATIFPKLWPKLKYWPGVVLSILMIACNYANVQIIFWGDPLTEYVPTCGQFPSKSVNRFQTFLAIALYMSIAHMVINVIILYINVLQDRQQSKSFNVNQRYQSREALKSSQAIFFLSMSQFFACLIYSVFTKVFLEFQLNLSPLQSGLVLALSYTTPYACIAIPSLIIFTFRFIKNQRLRNINELRSQTETGDECMRKIAKIWEK.

Residues 1–23 lie on the Extracellular side of the membrane; it reads MTTNNPVCASDAHMEMYSSKLYT. Residues 24–44 traverse the membrane as a helical segment; the sequence is SALFLNLIIATTSMILTGFAI. Residues 45–57 lie on the Cytoplasmic side of the membrane; that stretch reads QKLFMESIINIST. Residues 58–80 form a helical membrane-spanning segment; it reads RMFLFCGLMCCSLHQTAYIVLRI. The Extracellular segment spans residues 81–105; the sequence is QVIYQVFFKLSEPCNLYYPAIDCKY. A helical transmembrane segment spans residues 106–126; sequence VTFSLVAGNTGMIFIQSAMTI. Residues 127-145 are Cytoplasmic-facing; that stretch reads DRIFATIFPKLWPKLKYWP. Residues 146–166 traverse the membrane as a helical segment; it reads GVVLSILMIACNYANVQIIFW. Topologically, residues 167–191 are extracellular; sequence GDPLTEYVPTCGQFPSKSVNRFQTF. The chain crosses the membrane as a helical span at residues 192–212; it reads LAIALYMSIAHMVINVIILYI. Residues 213–239 lie on the Cytoplasmic side of the membrane; it reads NVLQDRQQSKSFNVNQRYQSREALKSS. Residues 240 to 260 traverse the membrane as a helical segment; it reads QAIFFLSMSQFFACLIYSVFT. Over 261–277 the chain is Extracellular; that stretch reads KVFLEFQLNLSPLQSGL. The helical transmembrane segment at 278 to 298 threads the bilayer; that stretch reads VLALSYTTPYACIAIPSLIIF. Residues 299–334 are Cytoplasmic-facing; it reads TFRFIKNQRLRNINELRSQTETGDECMRKIAKIWEK.

The protein belongs to the nematode receptor-like protein sra family. As to expression, expressed in interneurons AIY and AVB in L1 larvae. In adults, strong expression is seen in AIY and AIA but only weak expression in AVB.

The protein localises to the membrane. In terms of biological role, a G protein-coupled receptor required for olfactory imprinting a requisite in ordorant response such as benzaldehyde and isoamylalcohol. The sequence is that of Serpentine receptor class alpha-11 (sra-11) from Caenorhabditis elegans.